The primary structure comprises 117 residues: uncharacterized protein (117 aa).

An N-terminal signal peptide occupies residues 1–22 (MHVKYLAGIVGAALLMAGCSSS).

This is an uncharacterized protein from Escherichia coli O6:H1 (strain CFT073 / ATCC 700928 / UPEC).